A 380-amino-acid chain; its full sequence is Queuine tRNA-ribosyltransferase (380 aa).

The active-site Proton acceptor is Asp-96. Substrate is bound by residues 96 to 100, Asp-150, Gln-193, and Gly-220; that span reads DSGGF. An RNA binding region spans residues 251 to 257; the sequence is GVGAPDS. The active-site Nucleophile is Asp-270. An RNA binding; important for wobble base 34 recognition region spans residues 275 to 279; it reads TRIAR. Residues Cys-308, Cys-310, Cys-313, and His-339 each contribute to the Zn(2+) site.

Belongs to the queuine tRNA-ribosyltransferase family. Homodimer. Within each dimer, one monomer is responsible for RNA recognition and catalysis, while the other monomer binds to the replacement base PreQ1. Requires Zn(2+) as cofactor.

It carries out the reaction 7-aminomethyl-7-carbaguanine + guanosine(34) in tRNA = 7-aminomethyl-7-carbaguanosine(34) in tRNA + guanine. It participates in tRNA modification; tRNA-queuosine biosynthesis. Its function is as follows. Catalyzes the base-exchange of a guanine (G) residue with the queuine precursor 7-aminomethyl-7-deazaguanine (PreQ1) at position 34 (anticodon wobble position) in tRNAs with GU(N) anticodons (tRNA-Asp, -Asn, -His and -Tyr). Catalysis occurs through a double-displacement mechanism. The nucleophile active site attacks the C1' of nucleotide 34 to detach the guanine base from the RNA, forming a covalent enzyme-RNA intermediate. The proton acceptor active site deprotonates the incoming PreQ1, allowing a nucleophilic attack on the C1' of the ribose to form the product. After dissociation, two additional enzymatic reactions on the tRNA convert PreQ1 to queuine (Q), resulting in the hypermodified nucleoside queuosine (7-(((4,5-cis-dihydroxy-2-cyclopenten-1-yl)amino)methyl)-7-deazaguanosine). The polypeptide is Queuine tRNA-ribosyltransferase (Streptococcus mutans serotype c (strain ATCC 700610 / UA159)).